Here is a 250-residue protein sequence, read N- to C-terminus: Envelope glycoprotein L (250 aa).

The N-terminal stretch at 1–18 (MELLLFVMSLILLTFSKA) is a signal peptide. The gL betaherpesvirus-type domain occupies 31–239 (KLDDCIAAVI…EAYNSKLPFR (209 aa)). Cys-136 and Cys-141 are disulfide-bonded.

This sequence belongs to the herpesviridae glycoprotein L (gL) family. Betaherpesvirinae gL subfamily. As to quaternary structure, interacts with glycoprotein H (gH); this interaction is necessary for the correct processing and cell surface expression of gH. Part of a gH-gL-gO complex.

The protein resides in the virion membrane. Its subcellular location is the host cell membrane. It is found in the host Golgi apparatus. It localises to the host trans-Golgi network. In terms of biological role, the heterodimer glycoprotein H-glycoprotein L is required for the fusion of viral and plasma membranes leading to virus entry into the host cell. Acts as a functional inhibitor of gH and maintains gH in an inhibited form. Upon binding to host integrins, gL dissociates from gH leading to activation of the viral fusion glycoproteins gB and gH. This chain is Envelope glycoprotein L, found in Homo sapiens (Human).